Here is a 1486-residue protein sequence, read N- to C-terminus: Chromosome partition protein MukB (1486 aa).

Glycine 34–serine 41 is a binding site for ATP. 3 coiled-coil regions span residues leucine 326 to glutamine 418, leucine 444 to glutamine 480, and arginine 509 to valine 603. The segment at proline 666–arginine 783 is flexible hinge. Coiled-coil stretches lie at residues glutamate 835–glutamate 923, glutamate 977–alanine 1115, and valine 1209–serine 1266.

This sequence belongs to the SMC family. MukB subfamily. In terms of assembly, homodimerization via its hinge domain. Binds to DNA via its C-terminal region. Interacts, and probably forms a ternary complex, with MukE and MukF via its C-terminal region. The complex formation is stimulated by calcium or magnesium. Interacts with tubulin-related protein FtsZ.

Its subcellular location is the cytoplasm. The protein localises to the nucleoid. Its function is as follows. Plays a central role in chromosome condensation, segregation and cell cycle progression. Functions as a homodimer, which is essential for chromosome partition. Involved in negative DNA supercoiling in vivo, and by this means organize and compact chromosomes. May achieve or facilitate chromosome segregation by condensation DNA from both sides of a centrally located replisome during cell division. The chain is Chromosome partition protein MukB from Escherichia coli O6:H1 (strain CFT073 / ATCC 700928 / UPEC).